Here is a 177-residue protein sequence, read N- to C-terminus: Large ribosomal subunit protein uL6 (177 aa).

The protein belongs to the universal ribosomal protein uL6 family. In terms of assembly, part of the 50S ribosomal subunit.

Functionally, this protein binds to the 23S rRNA, and is important in its secondary structure. It is located near the subunit interface in the base of the L7/L12 stalk, and near the tRNA binding site of the peptidyltransferase center. This chain is Large ribosomal subunit protein uL6, found in Pseudomonas fluorescens (strain SBW25).